The chain runs to 405 residues: Polyadenylate-binding protein RBP45B (405 aa).

Residues 1 to 19 (MMQQPPPGGILPHHAPPPS) are compositionally biased toward pro residues. Residues 1–54 (MMQQPPPGGILPHHAPPPSAQQQYGYQQPYGIAGAAPPPPQMWNPQAAAPPSVQ) form a disordered region. Low complexity predominate over residues 20–35 (AQQQYGYQQPYGIAGA). RRM domains are found at residues 62–143 (RTLW…WASL), 155–234 (YTIF…PAAS), and 261–333 (TTVF…WGRS). Positions 379–405 (GGYQQTPQAGQQPPQQPPQQQQVGFSY) are disordered. Low complexity predominate over residues 380–405 (GYQQTPQAGQQPPQQPPQQQQVGFSY).

Belongs to the polyadenylate-binding RBP45 family. In terms of assembly, both isoform 1 and isoform 2 interact with poly(A)+ RNA in nucleus. As to expression, expressed in roots, leaves, stems, flowers, siliques, and seedlings. Present in immature anther tissues (tapetum cells) and mature pollen grains.

The protein resides in the nucleus. Its function is as follows. Heterogeneous nuclear ribonucleoprotein (hnRNP)-protein binding the poly(A) tail of mRNA and probably involved in some steps of pre-mRNA maturation. The protein is Polyadenylate-binding protein RBP45B (RBP45B) of Arabidopsis thaliana (Mouse-ear cress).